The sequence spans 115 residues: Protein E6A (115 aa).

The first 25 residues, 1–25 (MTDKFYFYGLFWGILLFVFLQHMQG), serve as a signal peptide directing secretion.

In Equine herpesvirus 2 (strain 86/87) (EHV-2), this protein is Protein E6A (12).